Consider the following 323-residue polypeptide: MCISEGKMDWRSWLRKKFQVRSQLLRGCMAEFLAVFVLMVFTEGCSASAIFTHRRNDLLFAAFGSGLAVTMAVYVAGGVTGAFLNPAIAVAFSVLGKLPWKNCFCYMIAQYLGAFLASLAIYAQYYDALNIFDGGHRQVLGDNGTAQIWSTYPQAFLSPQGAFVDQVFGTALLIIVVLSMVDKKNWKPQNGYFPIAIGLLIVVLDISLAYNAGAALNPSRDLAPRLFTYVAGYGTETFSVKGYTWFFVPVVGSHAGAIVGAVIYQLFIGAQWPQDDLDDSNSVSSMSIHEKNFSLAKRKNTRNFNLDITRDFKERNGISTVLY.

Helical transmembrane passes span 32–54 (FLAVFVLMVFTEGCSASAIFTHR), 74–96 (YVAGGVTGAFLNPAIAVAFSVLG), and 103–123 (CFCYMIAQYLGAFLASLAIYA). The NPA 1 signature appears at 85 to 87 (NPA). Asn-143 carries N-linked (GlcNAc...) asparagine glycosylation. Transmembrane regions (helical) follow at residues 161–181 (GAFVDQVFGTALLIIVVLSMV) and 193–213 (FPIAIGLLIVVLDISLAYNAG). The short motif at 217–219 (NPS) is the NPA 2 element. A helical transmembrane segment spans residues 243-263 (YTWFFVPVVGSHAGAIVGAVI). N-linked (GlcNAc...) asparagine glycosylation is present at Asn-292.

The protein belongs to the MIP/aquaporin (TC 1.A.8) family.

It localises to the cell membrane. It carries out the reaction H2O(in) = H2O(out). The catalysed reaction is glycerol(in) = glycerol(out). Its function is as follows. Aquaglyceroporin that may modulate the water content and osmolytes during anhydrobiosis. This is Aquaporin-2 from Milnesium tardigradum (Water bear).